The sequence spans 310 residues: NAD-dependent protein deacylase sirtuin-5, mitochondrial (310 aa).

A mitochondrion-targeting transit peptide spans Met-1–Pro-36. A Deacetylase sirtuin-type domain is found at Ser-37–Gly-307. Residue Gly-58–Trp-77 participates in NAD(+) binding. Substrate contacts are provided by Tyr-102 and Arg-105. Gln-140 to Asp-143 is a binding site for NAD(+). His-158 functions as the Proton acceptor in the catalytic mechanism. 4 residues coordinate Zn(2+): Cys-166, Cys-169, Cys-207, and Cys-212. NAD(+)-binding positions include Gly-249–Ser-251, Asn-275–Glu-277, and Cys-293.

The protein belongs to the sirtuin family. Class III subfamily. Monomer. Homodimer. Interacts with CPS1. Interacts with PCCA. Requires Zn(2+) as cofactor.

The protein resides in the mitochondrion. The protein localises to the cytoplasm. Its subcellular location is the cytosol. It is found in the nucleus. The catalysed reaction is N(6)-malonyl-L-lysyl-[protein] + NAD(+) + H2O = 2''-O-malonyl-ADP-D-ribose + nicotinamide + L-lysyl-[protein]. It catalyses the reaction N(6)-succinyl-L-lysyl-[protein] + NAD(+) + H2O = 2''-O-succinyl-ADP-D-ribose + nicotinamide + L-lysyl-[protein]. The enzyme catalyses N(6)-glutaryl-L-lysyl-[protein] + NAD(+) + H2O = 2''-O-glutaryl-ADP-D-ribose + nicotinamide + L-lysyl-[protein]. Its function is as follows. NAD-dependent lysine demalonylase, desuccinylase and deglutarylase that specifically removes malonyl, succinyl and glutaryl groups on target proteins. Activates CPS1 and contributes to the regulation of blood ammonia levels during prolonged fasting: acts by mediating desuccinylation and deglutarylation of CPS1, thereby increasing CPS1 activity in response to elevated NAD levels during fasting. Activates SOD1 by mediating its desuccinylation, leading to reduced reactive oxygen species. Activates SHMT2 by mediating its desuccinylation. Modulates ketogenesis through the desuccinylation and activation of HMGCS2. Has weak NAD-dependent protein deacetylase activity; however this activity may not be physiologically relevant in vivo. Can deacetylate cytochrome c (CYCS) and a number of other proteins in vitro such as UOX. In Canis lupus familiaris (Dog), this protein is NAD-dependent protein deacylase sirtuin-5, mitochondrial.